A 487-amino-acid polypeptide reads, in one-letter code: Cytochrome P450 720B2 (487 aa).

Residues 14-34 form a helical membrane-spanning segment; sequence WLVGLLCLVLGFLLLQLYKLV. C436 serves as a coordination point for heme.

This sequence belongs to the cytochrome P450 family. The cofactor is heme.

It localises to the membrane. This is Cytochrome P450 720B2 (CYP720B2) from Pinus taeda (Loblolly pine).